We begin with the raw amino-acid sequence, 478 residues long: Endoglucanase 18 (478 aa).

An N-terminal signal peptide occupies residues 1 to 21; the sequence is MGKLLVVMLIGMFLAFESLEA. N29 is a glycosylation site (N-linked (GlcNAc...) asparagine). The Nucleophile role is filled by D76. H398 is a catalytic residue. Residues 433–452 form a disordered region; it reads HTGAIVGGPNSSDQYSDKRT. The N-linked (GlcNAc...) asparagine glycan is linked to N442. Active-site residues include D449 and E458.

Belongs to the glycosyl hydrolase 9 (cellulase E) family.

The protein resides in the secreted. The catalysed reaction is Endohydrolysis of (1-&gt;4)-beta-D-glucosidic linkages in cellulose, lichenin and cereal beta-D-glucans.. The polypeptide is Endoglucanase 18 (Arabidopsis thaliana (Mouse-ear cress)).